Reading from the N-terminus, the 552-residue chain is uncharacterized protein (552 aa).

The tract at residues 1–59 (MPLEKTNTHDSTATVEDQEATDNPMHLTQSRMLDLAGNPNRTTSRQSETLFPNGVDLNY) is disordered. Residues 39-50 (PNRTTSRQSETL) are compositionally biased toward polar residues. The next 12 membrane-spanning stretches (helical) occupy residues 116–136 (ITIVNSLLVVCSAFGSSVIAG), 158–178 (LMVVGFGIGPLVISPLSEMIG), 181–201 (IVYLVTLMIYIVLQIPCALAP), 203–223 (IACLLIVRFFCGCFGCTPLTL), 238–258 (GLAIAFFAAGPYAGPTLGPLV), 271–291 (WIFWVNMIYMFVMYLTLLPVP), 345–365 (ILVCISGYIALIYALLYGYFF), 383–403 (GLMFIPILVGVVGALSTTPFL), 424–444 (LVGMCIASPFIPTGLLIFAWT), 450–470 (IWIGPAFSGAPFGYGMVLFYF), 484–506 (CASALAAKTMVRSAGGAAFPLFI), and 519–539 (FFLLGMVAVAAIPIPFTFYLF).

The protein belongs to the major facilitator superfamily.

The protein resides in the membrane. This is an uncharacterized protein from Schizosaccharomyces pombe (strain 972 / ATCC 24843) (Fission yeast).